A 131-amino-acid polypeptide reads, in one-letter code: Small ribosomal subunit protein uS8 (131 aa).

This sequence belongs to the universal ribosomal protein uS8 family. In terms of assembly, part of the 30S ribosomal subunit. Contacts proteins S5 and S12.

Functionally, one of the primary rRNA binding proteins, it binds directly to 16S rRNA central domain where it helps coordinate assembly of the platform of the 30S subunit. This is Small ribosomal subunit protein uS8 from Burkholderia multivorans (strain ATCC 17616 / 249).